Reading from the N-terminus, the 174-residue chain is Crossover junction endodeoxyribonuclease RuvC (174 aa).

Residues D8, E68, and D140 contribute to the active site. Residues D8, E68, and D140 each coordinate Mg(2+).

Belongs to the RuvC family. Homodimer which binds Holliday junction (HJ) DNA. The HJ becomes 2-fold symmetrical on binding to RuvC with unstacked arms; it has a different conformation from HJ DNA in complex with RuvA. In the full resolvosome a probable DNA-RuvA(4)-RuvB(12)-RuvC(2) complex forms which resolves the HJ. Mg(2+) serves as cofactor.

The protein resides in the cytoplasm. The catalysed reaction is Endonucleolytic cleavage at a junction such as a reciprocal single-stranded crossover between two homologous DNA duplexes (Holliday junction).. The RuvA-RuvB-RuvC complex processes Holliday junction (HJ) DNA during genetic recombination and DNA repair. Endonuclease that resolves HJ intermediates. Cleaves cruciform DNA by making single-stranded nicks across the HJ at symmetrical positions within the homologous arms, yielding a 5'-phosphate and a 3'-hydroxyl group; requires a central core of homology in the junction. The consensus cleavage sequence is 5'-(A/T)TT(C/G)-3'. Cleavage occurs on the 3'-side of the TT dinucleotide at the point of strand exchange. HJ branch migration catalyzed by RuvA-RuvB allows RuvC to scan DNA until it finds its consensus sequence, where it cleaves and resolves the cruciform DNA. This is Crossover junction endodeoxyribonuclease RuvC from Legionella pneumophila subsp. pneumophila (strain Philadelphia 1 / ATCC 33152 / DSM 7513).